Consider the following 545-residue polypeptide: Chaperonin GroEL (545 aa).

ATP contacts are provided by residues 30–33 (TLGP), lysine 51, 87–91 (DGTTT), glycine 415, 479–481 (NAA), and aspartate 495. The segment at 526 to 545 (KEDKPDLGNAGAGGNMGGMM) is disordered. The span at 535-545 (AGAGGNMGGMM) shows a compositional bias: gly residues.

Belongs to the chaperonin (HSP60) family. As to quaternary structure, forms a cylinder of 14 subunits composed of two heptameric rings stacked back-to-back. Interacts with the co-chaperonin GroES.

It localises to the cytoplasm. The catalysed reaction is ATP + H2O + a folded polypeptide = ADP + phosphate + an unfolded polypeptide.. Functionally, together with its co-chaperonin GroES, plays an essential role in assisting protein folding. The GroEL-GroES system forms a nano-cage that allows encapsulation of the non-native substrate proteins and provides a physical environment optimized to promote and accelerate protein folding. The chain is Chaperonin GroEL from Blochmanniella pennsylvanica (strain BPEN).